The primary structure comprises 573 residues: NADH-ubiquinone oxidoreductase chain 5 (573 aa).

A run of 16 helical transmembrane segments spans residues 4 to 24 (ISFI…LYYL), 44 to 64 (IVMT…VLMI), 85 to 105 (FIML…SPNL), 106 to 126 (VSIL…VIYF), 147 to 167 (VALL…YIFY), 170 to 190 (VMQN…AAMT), 212 to 234 (SALV…FNIV), 239 to 259 (WLGQ…GLGA), 268 to 288 (IIAL…SMGF), 294 to 314 (FHLL…GAII), 337 to 357 (SACF…AGFY), 377 to 396 (FLYF…LVYY), 422 to 442 (LGLL…IFPF), 452 to 472 (LKML…LISI), 487 to 507 (LTLF…GMIF), and 552 to 572 (LKIY…FLLF).

The protein belongs to the complex I subunit 5 family.

The protein resides in the mitochondrion inner membrane. It catalyses the reaction a ubiquinone + NADH + 5 H(+)(in) = a ubiquinol + NAD(+) + 4 H(+)(out). In terms of biological role, core subunit of the mitochondrial membrane respiratory chain NADH dehydrogenase (Complex I) that is believed to belong to the minimal assembly required for catalysis. Complex I functions in the transfer of electrons from NADH to the respiratory chain. The immediate electron acceptor for the enzyme is believed to be ubiquinone. This is NADH-ubiquinone oxidoreductase chain 5 (mt:ND5) from Drosophila yakuba (Fruit fly).